Here is a 104-residue protein sequence, read N- to C-terminus: L-rhamnose mutarotase (104 aa).

Tyrosine 18 contributes to the substrate binding site. Histidine 22 (proton donor) is an active-site residue. Substrate-binding positions include tyrosine 41 and 76-77 (WW).

Belongs to the rhamnose mutarotase family. In terms of assembly, homodimer.

The protein resides in the cytoplasm. It catalyses the reaction alpha-L-rhamnose = beta-L-rhamnose. It participates in carbohydrate metabolism; L-rhamnose metabolism. Its function is as follows. Involved in the anomeric conversion of L-rhamnose. The sequence is that of L-rhamnose mutarotase from Burkholderia ambifaria (strain MC40-6).